The primary structure comprises 269 residues: MVRVAIAGAAGRMGRNLIKAVNGSQFAVLAAASERPESSLIGVDVGEMAGLGKSGILIVDDLAKVTDDFDVIIDFTLPISTLKNIELCQEHNKAIVIGTTGFSEPGKEIIDQASKEIPVVMAPNYSVGVNLVFKLLEKAAKVMGDYCDIEIVEAHHRYKVDAPSGTAIGMGEAIAGAMGNKLEDVAVYAREGITGERSKDEIGFATIRAGDIVGEHTAMFADIGERVEITHKATDRMTFANGAVRASHWLHKKEPGFYTMHDVLNLDQI.

Residues 8-13 and Glu-34 contribute to the NAD(+) site; that span reads GAAGRM. Arg-35 contributes to the NADP(+) binding site. Residues 98 to 100 and 122 to 125 contribute to the NAD(+) site; these read GTT and APNY. The Proton donor/acceptor role is filled by His-155. Position 156 (His-156) interacts with (S)-2,3,4,5-tetrahydrodipicolinate. The active-site Proton donor is the Lys-159. 165–166 provides a ligand contact to (S)-2,3,4,5-tetrahydrodipicolinate; the sequence is GT.

The protein belongs to the DapB family.

It is found in the cytoplasm. It catalyses the reaction (S)-2,3,4,5-tetrahydrodipicolinate + NAD(+) + H2O = (2S,4S)-4-hydroxy-2,3,4,5-tetrahydrodipicolinate + NADH + H(+). The enzyme catalyses (S)-2,3,4,5-tetrahydrodipicolinate + NADP(+) + H2O = (2S,4S)-4-hydroxy-2,3,4,5-tetrahydrodipicolinate + NADPH + H(+). Its pathway is amino-acid biosynthesis; L-lysine biosynthesis via DAP pathway; (S)-tetrahydrodipicolinate from L-aspartate: step 4/4. Catalyzes the conversion of 4-hydroxy-tetrahydrodipicolinate (HTPA) to tetrahydrodipicolinate. This Aliivibrio fischeri (strain ATCC 700601 / ES114) (Vibrio fischeri) protein is 4-hydroxy-tetrahydrodipicolinate reductase.